Consider the following 353-residue polypeptide: S-adenosylmethionine:tRNA ribosyltransferase-isomerase (353 aa).

This sequence belongs to the QueA family. As to quaternary structure, monomer.

It is found in the cytoplasm. The catalysed reaction is 7-aminomethyl-7-carbaguanosine(34) in tRNA + S-adenosyl-L-methionine = epoxyqueuosine(34) in tRNA + adenine + L-methionine + 2 H(+). The protein operates within tRNA modification; tRNA-queuosine biosynthesis. Functionally, transfers and isomerizes the ribose moiety from AdoMet to the 7-aminomethyl group of 7-deazaguanine (preQ1-tRNA) to give epoxyqueuosine (oQ-tRNA). This Rickettsia bellii (strain OSU 85-389) protein is S-adenosylmethionine:tRNA ribosyltransferase-isomerase.